A 1562-amino-acid chain; its full sequence is MSFGGINTFQQYNTDLGLGHNGVRISLNYFDGLPDPSLLNSLYSNELKLIFKSLLKRDETTKEKALMDLSNLISDFNQNEYFFNDIFLLCWSQIYAKLIISDYKVIRLQSHQITIMLVKSLRKKISKFLKDFIPLILLGTCELDYSVSKPSLNELTECFNKDPAKINALWAVFQEQLLNLVKEIVVNENEDTISDERYSSKEESEFRYHRVIASAVLLLIKLFVHNKDVSERNSSSLKVILSDESIWKLLNLKNGQNTNAYETVLRLIDVLYTRGYMPSHKNIMKLAVKKLLKSLTHITSKNILKVCPVLPSILNLLATLDDYEDGTIWSYDKSSKEKVLKFLSVSRTSPSPGFFNAVFALYSSTKRHSFLDYYLEWLPFWQKSVQRLNEKGFSARNSAEVLNEFWTNFLKFAEDSSEERVKKMVESEIFNSLSCGKSLSEYTKLNQTLSGVFPPDKWEREIEDYFTSDEDIRKIKVSFEKNLFALLVTSPNNESAISRLFDFFVQLIETDPSNVFNKYDGVYDALNYFLDSDMIFLNGKIGKFINEIPTLVQESTYQNFAGIMAQYSNSKFFKMNTDAITSLEDFFIVALSFNLPKTIILATMNELDNDIYQQLMKSDSLELELYIEDFMKNYKFDDSGEIFKGNNKFLNQRTITTLYRSAVANGQVEQFCAVLSKLDETFFSTLLLNTDFLSCALYEVSEDTNEKLFKLSLQLAKGNSEIANKLAQVILQHAQVYFSPGAKEKYVTHAVELINGCNDTSQIFFPANAIEVFARYMPAIDYRSSLVSSLSTNTHLLLTDDKPINLKNMQKLIRYALFLDALLDALPERVNNHIVAFITVVSELVTDYNCLSEEPNDLYYDFGHTFFKHGKVNLNFSDIVGNVIQPANGGDAMLTFDIAESNSVYFFYYSRVLYKVLLNSIDTVSSTTLNGLLASVESFVTKTVRDQKSTDKDYLLCAILLLMFNRSNSKDEITKLRTLLASQLIGIREVELVDQEFKSLALLNNLLDIPQADKQFVPIAPQRLNMIFRSILKWLDSDLAYEPSFSTVRLLLLDFFTKLMRFEGVRDMGITAFELSERLLADSLSMCQIDDTLYLLELRSSCLNLYETLSQGVSKNGEEISEYGDEIQENLIELMFLNFNQERNNQVSTLFYQKLYKVISSMELKKLESQYKRIFEVVLNDKDIGSNINQSRLLTTLLGSLVVKTQQDIIIEYELRIQKQTGSDVDGSASDNDVNSKFKLPQKLLQKVTDEVPKEYLEYENKNSFIKYLWYWHLILMYFKDTSYNMRQIFIEQLKEAGLINRMFDFITDQIDLRDTEFWKQVDTKEISEYNIVGNNFSPYKEDIFEECKKLLGHTLYQLFNNVGCLTSIWWLNIKDRTLQNDIEKFVSEFISPILIKNEFDDINSKMDRLTSNDDALTIKLNNITNEVKASYLIDDQKLEISFKLPKNYPLTNIQVNGVSRVGISEQKWKQWIMSTQHVITGMNGSVLDSLELFTKNVHLQFSGFEECAICYSILHAVDRKLPSKTCPTCKNKFHGACLYKWFRSSGNNTCPLCRSEIPFRR.

HEAT repeat units lie at residues 41–78, 127–164, 175–217, 262–301, 304–348, 495–532, 555–592, 813–850, 908–945, 997–1037, 1047–1085, 1188–1226, 1263–1298, and 1299–1339; these read SLYS…DFNQ, KFLK…KDPA, EQLL…SAVL, ETVL…ITSK, LKVC…VSRT, SAIS…FLDS, STYQ…VALS, IRYA…DYNC, YYSR…KTVR, FKSL…WLDS, TVRL…DSLS, INQS…SDVD, NSFI…KEAG, and LINR…NFSP. Residues 1508 to 1555 form an RING-type zinc finger; sequence CAICYSILHAVDRKLPSKTCPTCKNKFHGACLYKWFRSSGNNTCPLCR.

The protein belongs to the LTN1 family. In terms of assembly, component of the ribosome quality control complex (RQC), composed of the E3 ubiquitin ligase RKR1/LTN1, RQC1 and RQC2, as well as CDC48 and its ubiquitin-binding cofactors associated with the 60S ribosomal subunits.

It localises to the nucleus. The protein localises to the cytoplasm. The protein resides in the cytosol. The enzyme catalyses S-ubiquitinyl-[E2 ubiquitin-conjugating enzyme]-L-cysteine + [acceptor protein]-L-lysine = [E2 ubiquitin-conjugating enzyme]-L-cysteine + N(6)-ubiquitinyl-[acceptor protein]-L-lysine.. It participates in protein modification; protein ubiquitination. E3 ubiquitin-protein ligase component of the ribosome quality control complex (RQC), a ribosome-associated complex that mediates ubiquitination and extraction of incompletely synthesized nascent chains for proteasomal degradation. Mediates ubiquitination of proteins derived from mRNAs lacking stop codons (non-stop proteins) and other translation arrest products induced by poly-lysine sequences and tandem rare codons. Ubiquitination leads to CDC48 recruitment for extraction and degradation of the incomplete translation product. May indirectly play a role in chromatin function and transcription. The protein is E3 ubiquitin-protein ligase listerin of Saccharomyces cerevisiae (strain ATCC 204508 / S288c) (Baker's yeast).